The following is a 319-amino-acid chain: Glutathione synthetase (319 aa).

The ATP-grasp domain maps to 129–314 (KLAILNFSRF…VAAMFADAVA (186 aa)). 155-211 (LKEHGDIIIKPLDGMGGMGIFRLTEKDPNIGSILETLMQLDSRTIMAQRYIPEIVHG) is a binding site for ATP. Residues Glu-285 and Asn-287 each contribute to the Mg(2+) site.

The protein belongs to the prokaryotic GSH synthase family. The cofactor is Mg(2+). Mn(2+) serves as cofactor.

It carries out the reaction gamma-L-glutamyl-L-cysteine + glycine + ATP = glutathione + ADP + phosphate + H(+). The protein operates within sulfur metabolism; glutathione biosynthesis; glutathione from L-cysteine and L-glutamate: step 2/2. The protein is Glutathione synthetase of Neisseria meningitidis serogroup B (strain ATCC BAA-335 / MC58).